Here is a 355-residue protein sequence, read N- to C-terminus: UDP-N-acetylglucosamine--N-acetylmuramyl-(pentapeptide) pyrophosphoryl-undecaprenol N-acetylglucosamine transferase (355 aa).

Residues 7–9 (TGG), Asn-119, Arg-159, Ser-187, Ile-241, and Gln-286 each bind UDP-N-acetyl-alpha-D-glucosamine.

Belongs to the glycosyltransferase 28 family. MurG subfamily.

It localises to the cell inner membrane. The enzyme catalyses di-trans,octa-cis-undecaprenyl diphospho-N-acetyl-alpha-D-muramoyl-L-alanyl-D-glutamyl-meso-2,6-diaminopimeloyl-D-alanyl-D-alanine + UDP-N-acetyl-alpha-D-glucosamine = di-trans,octa-cis-undecaprenyl diphospho-[N-acetyl-alpha-D-glucosaminyl-(1-&gt;4)]-N-acetyl-alpha-D-muramoyl-L-alanyl-D-glutamyl-meso-2,6-diaminopimeloyl-D-alanyl-D-alanine + UDP + H(+). The protein operates within cell wall biogenesis; peptidoglycan biosynthesis. Functionally, cell wall formation. Catalyzes the transfer of a GlcNAc subunit on undecaprenyl-pyrophosphoryl-MurNAc-pentapeptide (lipid intermediate I) to form undecaprenyl-pyrophosphoryl-MurNAc-(pentapeptide)GlcNAc (lipid intermediate II). This Nitrosomonas eutropha (strain DSM 101675 / C91 / Nm57) protein is UDP-N-acetylglucosamine--N-acetylmuramyl-(pentapeptide) pyrophosphoryl-undecaprenol N-acetylglucosamine transferase.